The following is a 472-amino-acid chain: 3-isopropylmalate dehydratase large subunit (472 aa).

Residues Cys347, Cys407, and Cys410 each coordinate [4Fe-4S] cluster.

This sequence belongs to the aconitase/IPM isomerase family. LeuC type 1 subfamily. In terms of assembly, heterodimer of LeuC and LeuD. Requires [4Fe-4S] cluster as cofactor.

The enzyme catalyses (2R,3S)-3-isopropylmalate = (2S)-2-isopropylmalate. Its pathway is amino-acid biosynthesis; L-leucine biosynthesis; L-leucine from 3-methyl-2-oxobutanoate: step 2/4. In terms of biological role, catalyzes the isomerization between 2-isopropylmalate and 3-isopropylmalate, via the formation of 2-isopropylmaleate. This chain is 3-isopropylmalate dehydratase large subunit, found in Opitutus terrae (strain DSM 11246 / JCM 15787 / PB90-1).